A 223-amino-acid chain; its full sequence is Phosphoribosylformylglycinamidine synthase subunit PurQ (223 aa).

The Glutamine amidotransferase type-1 domain occupies 2-223 (KFAVIQFPGS…ASVLKNFVGK (222 aa)). Cys-86 functions as the Nucleophile in the catalytic mechanism. Residues His-195 and Glu-197 contribute to the active site.

Part of the FGAM synthase complex composed of 1 PurL, 1 PurQ and 2 PurS subunits.

The protein localises to the cytoplasm. It carries out the reaction N(2)-formyl-N(1)-(5-phospho-beta-D-ribosyl)glycinamide + L-glutamine + ATP + H2O = 2-formamido-N(1)-(5-O-phospho-beta-D-ribosyl)acetamidine + L-glutamate + ADP + phosphate + H(+). The enzyme catalyses L-glutamine + H2O = L-glutamate + NH4(+). It participates in purine metabolism; IMP biosynthesis via de novo pathway; 5-amino-1-(5-phospho-D-ribosyl)imidazole from N(2)-formyl-N(1)-(5-phospho-D-ribosyl)glycinamide: step 1/2. In terms of biological role, part of the phosphoribosylformylglycinamidine synthase complex involved in the purines biosynthetic pathway. Catalyzes the ATP-dependent conversion of formylglycinamide ribonucleotide (FGAR) and glutamine to yield formylglycinamidine ribonucleotide (FGAM) and glutamate. The FGAM synthase complex is composed of three subunits. PurQ produces an ammonia molecule by converting glutamine to glutamate. PurL transfers the ammonia molecule to FGAR to form FGAM in an ATP-dependent manner. PurS interacts with PurQ and PurL and is thought to assist in the transfer of the ammonia molecule from PurQ to PurL. The protein is Phosphoribosylformylglycinamidine synthase subunit PurQ of Lactococcus lactis subsp. lactis (strain IL1403) (Streptococcus lactis).